The sequence spans 431 residues: Glutamate-1-semialdehyde 2,1-aminomutase (431 aa).

Position 269 is an N6-(pyridoxal phosphate)lysine (lysine 269).

This sequence belongs to the class-III pyridoxal-phosphate-dependent aminotransferase family. HemL subfamily. In terms of assembly, homodimer. Pyridoxal 5'-phosphate is required as a cofactor.

It localises to the cytoplasm. It carries out the reaction (S)-4-amino-5-oxopentanoate = 5-aminolevulinate. It functions in the pathway porphyrin-containing compound metabolism; protoporphyrin-IX biosynthesis; 5-aminolevulinate from L-glutamyl-tRNA(Glu): step 2/2. The sequence is that of Glutamate-1-semialdehyde 2,1-aminomutase from Francisella tularensis subsp. holarctica (strain LVS).